Reading from the N-terminus, the 20-residue chain is Blooming-related protein 2 (20 aa).

The interval 1-20 (VSAEYLERQGPKDDXDCFDD) is disordered.

In terms of biological role, possible 'checkpoint' protein for cell division in the blooming process. This is Blooming-related protein 2 from Prorocentrum triestinum (Red tide alga).